Consider the following 624-residue polypeptide: Chaperone protein HtpG (624 aa).

The segment at 1-336 (MNMKGQETRG…SNDLPLNVSR (336 aa)) is a; substrate-binding. Residues 337 to 552 (EILQDSRITQ…ADEMSTQMAK (216 aa)) are b. Residues 553–624 (LFAAAGQQAP…IRRMNQLLTA (72 aa)) form a c region.

The protein belongs to the heat shock protein 90 family. Homodimer.

The protein resides in the cytoplasm. Molecular chaperone. Has ATPase activity. This chain is Chaperone protein HtpG, found in Yersinia pestis bv. Antiqua (strain Antiqua).